A 572-amino-acid chain; its full sequence is Glutathione hydrolase 5 proenzyme (572 aa).

Over 1-6 the chain is Cytoplasmic; the sequence is MAWGHR. Residues 7-29 form a helical; Signal-anchor for type II membrane protein membrane-spanning segment; sequence TTVCLVLLGVSLGLAIIVLAVVL. Residues 30 to 572 lie on the Extracellular side of the membrane; the sequence is PHHQASCRPD…LRKAGKASGY (543 aa). The N-linked (GlcNAc...) asparagine glycan is linked to Asn98. Residue Arg110 participates in L-glutamate binding. Asn185, Asn194, Asn204, Asn277, Asn303, Asn347, and Asn377 each carry an N-linked (GlcNAc...) asparagine glycan. Catalysis depends on Thr388, which acts as the Nucleophile. L-glutamate is bound by residues Thr406, Glu427, and 453–454; that span reads SS.

This sequence belongs to the gamma-glutamyltransferase family. In terms of assembly, heterodimer composed of the light and heavy chains. The active site is located in the light chain. Post-translationally, cleaved by autocatalysis into a large and a small subunit. Glycosylated. Widely expressed, but at low level, except in the airway epithelial cells. Detected in brain, heart, kidney, liver, lung, spleen, testis and trachea.

It localises to the membrane. The catalysed reaction is glutathione + H2O = L-cysteinylglycine + L-glutamate. The enzyme catalyses an S-substituted glutathione + H2O = an S-substituted L-cysteinylglycine + L-glutamate. It carries out the reaction leukotriene C4 + H2O = leukotriene D4 + L-glutamate. It catalyses the reaction S-[(2E,6E,10E)-geranylgeranyl]-L-glutathione + H2O = S-[(2E,6E,10E)-geranylgeranyl]-L-cysteinylglycine + L-glutamate. The catalysed reaction is an N-terminal (5-L-glutamyl)-[peptide] + an alpha-amino acid = 5-L-glutamyl amino acid + an N-terminal L-alpha-aminoacyl-[peptide]. Its pathway is lipid metabolism; leukotriene D4 biosynthesis. It functions in the pathway sulfur metabolism; glutathione metabolism. Its activity is regulated as follows. Inhibited by serine-borate. In terms of biological role, cleaves the gamma-glutamyl bond of extracellular glutathione tripeptide (gamma-Glu-Cys-Gly) and certain glutathione conjugates. Hydrolyzes glutathione releasing L-Glu and Cys-Gly dipeptide which is further metabolized to maintain extracellular cysteine levels but also to provide cysteine necessary for intracellular glutathione synthesis. Among glutathione-S-conjugates metabolizes leukotriene C4 (LTC4) and S-geranylgeranyl-glutathione (GGG), but is inactive toward gamma-glutamyl leucine. Converts extracellular LTC4 to LTD4 during acute inflammatory response. Acts as a negative regulator of GGG bioactivity. GGT5 (via GGG catabolism) and ABCC1 (via extracellular transport) establish GGG gradients within lymphoid tissues to position P2RY8-positive lymphocytes at germinal centers in lymphoid follicles and restrict their chemotactic transmigration from blood vessels to bone marrow parenchyma. The transpeptidation reaction, i.e. the transfer of gamma-glutamyl moiety to an acceptor molecule to yield a new gamma-glutamyl compound requires high concentration of dipeptide acceptor and is considered nonphysiological. This chain is Glutathione hydrolase 5 proenzyme (Ggt5), found in Rattus norvegicus (Rat).